The chain runs to 357 residues: tRNA-specific 2-thiouridylase MnmA (357 aa).

ATP contacts are provided by residues 6–13 (AMSGGVDS) and Leu-32. The active-site Nucleophile is Cys-101. Cys-101 and Cys-193 are oxidised to a cystine. Gly-125 is an ATP binding site. An interaction with tRNA region spans residues 143 to 145 (KDQ). Residue Cys-193 is the Cysteine persulfide intermediate of the active site.

The protein belongs to the MnmA/TRMU family.

It localises to the cytoplasm. It catalyses the reaction S-sulfanyl-L-cysteinyl-[protein] + uridine(34) in tRNA + AH2 + ATP = 2-thiouridine(34) in tRNA + L-cysteinyl-[protein] + A + AMP + diphosphate + H(+). Its function is as follows. Catalyzes the 2-thiolation of uridine at the wobble position (U34) of tRNA, leading to the formation of s(2)U34. This chain is tRNA-specific 2-thiouridylase MnmA, found in Mycolicibacterium vanbaalenii (strain DSM 7251 / JCM 13017 / BCRC 16820 / KCTC 9966 / NRRL B-24157 / PYR-1) (Mycobacterium vanbaalenii).